A 427-amino-acid chain; its full sequence is UBX domain-containing protein 10 (427 aa).

Residues 247–311 (LERFRSEREA…VQKKKKQYRA (65 aa)) adopt a coiled-coil conformation. Residues 323 to 425 (SEDEPARLSI…FPNGTVVVEL (103 aa)) form the UBX domain.

The protein localises to the endoplasmic reticulum. In terms of biological role, involved in protein degradation through the ubiquitin/proteasome pathway. The protein is UBX domain-containing protein 10 (ucp10) of Schizosaccharomyces pombe (strain 972 / ATCC 24843) (Fission yeast).